A 103-amino-acid chain; its full sequence is Potassium voltage-gated channel subfamily E member 3 (103 aa).

Asn-5, Asn-22, and Asn-41 each carry an N-linked (GlcNAc...) asparagine glycan. The segment at 30–52 (LCRPGPGPGPDNQTEDRRASLPG) is disordered. A helical membrane pass occupies residues 57-77 (SYMYILFVMFLFAVTVGSLIL). An interaction with KCNQ1 region spans residues 68-79 (FAVTVGSLILGY). The Cytoplasmic portion of the chain corresponds to 78 to 103 (GYTRSRKVDKRSDPYHVYIKNRVSMI).

It belongs to the potassium channel KCNE family. In terms of assembly, interacts with KCNB1. Interacts with KCNC2. Associates with KCNC4/Kv3.4. Interacts with KCNQ1; associates with a KCNQ1:KCNE3 stoichiometry of 4:4; produces a current with nearly instantaneous activation with a linear current-voltage relationship and alters membrane raft localization; affects KCNQ1 structure and gating properties.

It localises to the cell membrane. The protein resides in the cytoplasm. It is found in the perikaryon. The protein localises to the cell projection. Its subcellular location is the dendrite. It localises to the membrane raft. Functionally, ancillary protein that functions as a regulatory subunit of the voltage-gated potassium (Kv) channel complex composed of pore-forming and potassium-conducting alpha subunits and of regulatory beta subunits. KCNE3 beta subunit modulates the gating kinetics and enhances stability of the channel complex. Alters the gating of the delayed rectifier Kv channel containing KCNB1 alpha subunit. Associates with KCNC4/Kv3.4 alpha subunit to form the subthreshold Kv channel in skeletal muscle and to establish the resting membrane potential (RMP) in muscle cells. Association with KCNQ1/KCLQT1 alpha subunit may form the intestinal cAMP-stimulated potassium channel involved in chloride secretion that produces a current with nearly instantaneous activation with a linear current-voltage relationship. In Mus musculus (Mouse), this protein is Potassium voltage-gated channel subfamily E member 3.